The primary structure comprises 123 residues: Large ribosomal subunit protein bL20 (123 aa).

Basic residues predominate over residues 1–15 (MARVKRSVNAKKKRR). The segment at 1–23 (MARVKRSVNAKKKRREVLDQASG) is disordered.

It belongs to the bacterial ribosomal protein bL20 family.

Functionally, binds directly to 23S ribosomal RNA and is necessary for the in vitro assembly process of the 50S ribosomal subunit. It is not involved in the protein synthesizing functions of that subunit. This chain is Large ribosomal subunit protein bL20, found in Cutibacterium acnes (strain DSM 16379 / KPA171202) (Propionibacterium acnes).